We begin with the raw amino-acid sequence, 360 residues long: Melanoma-associated antigen B16 (360 aa).

The tract at residues 1–118 (MSQKNPEYAA…GNSVIPPDQP (118 aa)) is disordered. Basic and acidic residues predominate over residues 9-19 (AADHDHTREEM). Residues 63–98 (CSSSQLLTASNQEDPAYETPSTSRGLQHPYVSSSES) show a composition bias toward polar residues. One can recognise an MAGE domain in the interval 125–324 (IDGKVNFLVN…TVFPSQYEEA (200 aa)). The segment at 340–360 (AGPSSASGESSSDMGSNVPHI) is disordered. The segment covering 341–360 (GPSSASGESSSDMGSNVPHI) has biased composition (low complexity).

The chain is Melanoma-associated antigen B16 (Mageb16) from Rattus norvegicus (Rat).